Reading from the N-terminus, the 415-residue chain is MSVHAPAAPDLRTEVHDAARRARVASRTLATLSTETKNRALRAAADRVLMDAHLIIAGNERDLEKARAAGTPDAMLDRLALNPQRIDGVAAGLRQVASLPDPVGEVLRGNTLVNGLQLRQQRVPLGVVGIVYEGRPNVTVDAFGLTLKSGNAVLLRGSSSAAHSNAALVDSLRAALVAEGLDANAVQLLPSHDRASVTHLIQARGLVDVVIPRGGAGLIDAVVRDAQVPTIETGVGNCHVYVHSAADLDMAETILLNAKTRRPSVCNAAESVLIDAAIAEEAVPRLTKALQDAGVTVHADPTEEELRAEFLSMDIALAVVDGVDAAIAHVNEYGSGHTEAIVTADLAAAQRFTERVDAAAVMVNASTAFTDGEQFGFGAEIGISTQKLHARGPMGLPELTSTKWIVWGDGHTRPA.

The protein belongs to the gamma-glutamyl phosphate reductase family.

It is found in the cytoplasm. The enzyme catalyses L-glutamate 5-semialdehyde + phosphate + NADP(+) = L-glutamyl 5-phosphate + NADPH + H(+). It participates in amino-acid biosynthesis; L-proline biosynthesis; L-glutamate 5-semialdehyde from L-glutamate: step 2/2. Its function is as follows. Catalyzes the NADPH-dependent reduction of L-glutamate 5-phosphate into L-glutamate 5-semialdehyde and phosphate. The product spontaneously undergoes cyclization to form 1-pyrroline-5-carboxylate. The protein is Gamma-glutamyl phosphate reductase of Mycobacterium sp. (strain JLS).